The following is a 512-amino-acid chain: MKLKPIEVADILQKEIANINCLSELEEVGQVINVGDGIAKIYGLANVQSGEVVEFESGVKGLVLNLENDSVDAVIMGDDNQVQQGDKVKRTKEVLEVLVGTALLGRVVDALGNPIDGKGDIKSKEYRHIEMKAPGIIDRASVSEPVQTGIKVIDLLIPIGRGQRELIIGDRQTGKTAIAIDTIINQKKAHSLNDEKDKIYCIYVAIGQKRSSVAQIVKKLEDAGAMDYTIIVSATASEAAALQFVAPYAACSMGEYFRDNGKHALIIYDDLSKHAVAYRQISLLLRRPPGREAYPGDVFYLHSRLLECAAKMSEEKGGGSLTALPIIETQAGDVSAYIPTNVISITDGQIFLESELFYKGIRPAVNVGISVSRVGSAAQIKAMKQVAGSIKLELAQFRELESFLQFGSDLDSATKAQIEHGKRLVEILKQAQYHPFSVEEQIISIYAGTKKYLINIPVERIKEFEEKMLSEIKQNQKDILESIKSEKRITEENEQKLKTFLENFVKDFVKID.

169–176 (GDRQTGKT) contributes to the ATP binding site.

Belongs to the ATPase alpha/beta chains family. In terms of assembly, F-type ATPases have 2 components, CF(1) - the catalytic core - and CF(0) - the membrane proton channel. CF(1) has five subunits: alpha(3), beta(3), gamma(1), delta(1), epsilon(1). CF(0) has three main subunits: a(1), b(2) and c(9-12). The alpha and beta chains form an alternating ring which encloses part of the gamma chain. CF(1) is attached to CF(0) by a central stalk formed by the gamma and epsilon chains, while a peripheral stalk is formed by the delta and b chains.

The protein localises to the cell inner membrane. The catalysed reaction is ATP + H2O + 4 H(+)(in) = ADP + phosphate + 5 H(+)(out). Produces ATP from ADP in the presence of a proton gradient across the membrane. The alpha chain is a regulatory subunit. This Rickettsia bellii (strain OSU 85-389) protein is ATP synthase subunit alpha.